Here is an 89-residue protein sequence, read N- to C-terminus: Small ribosomal subunit protein uS15 (89 aa).

The protein belongs to the universal ribosomal protein uS15 family. As to quaternary structure, part of the 30S ribosomal subunit. Forms a bridge to the 50S subunit in the 70S ribosome, contacting the 23S rRNA.

Functionally, one of the primary rRNA binding proteins, it binds directly to 16S rRNA where it helps nucleate assembly of the platform of the 30S subunit by binding and bridging several RNA helices of the 16S rRNA. In terms of biological role, forms an intersubunit bridge (bridge B4) with the 23S rRNA of the 50S subunit in the ribosome. This chain is Small ribosomal subunit protein uS15, found in Mycobacteroides abscessus (strain ATCC 19977 / DSM 44196 / CCUG 20993 / CIP 104536 / JCM 13569 / NCTC 13031 / TMC 1543 / L948) (Mycobacterium abscessus).